A 513-amino-acid chain; its full sequence is Histidine ammonia-lyase (513 aa).

Residues 143-145 constitute a cross-link (5-imidazolinone (Ala-Gly)); that stretch reads ASG. S144 carries the 2,3-didehydroalanine (Ser) modification.

This sequence belongs to the PAL/histidase family. Contains an active site 4-methylidene-imidazol-5-one (MIO), which is formed autocatalytically by cyclization and dehydration of residues Ala-Ser-Gly.

It is found in the cytoplasm. The enzyme catalyses L-histidine = trans-urocanate + NH4(+). It participates in amino-acid degradation; L-histidine degradation into L-glutamate; N-formimidoyl-L-glutamate from L-histidine: step 1/3. This chain is Histidine ammonia-lyase, found in Xanthomonas axonopodis pv. citri (strain 306).